A 409-amino-acid chain; its full sequence is Dual-specificity RNA methyltransferase RlmN (409 aa).

Glu-121 (proton acceptor) is an active-site residue. Residues 127-376 (EEGRGTLCIS…IRTPRGRDIL (250 aa)) form the Radical SAM core domain. Cysteines 134 and 379 form a disulfide. [4Fe-4S] cluster contacts are provided by Cys-141, Cys-145, and Cys-148. S-adenosyl-L-methionine is bound by residues 205–206 (GE), Ser-237, 259–261 (SLH), and Asn-336. Residue Cys-379 is the S-methylcysteine intermediate of the active site.

The protein belongs to the radical SAM superfamily. RlmN family. [4Fe-4S] cluster is required as a cofactor.

Its subcellular location is the cytoplasm. The catalysed reaction is adenosine(2503) in 23S rRNA + 2 reduced [2Fe-2S]-[ferredoxin] + 2 S-adenosyl-L-methionine = 2-methyladenosine(2503) in 23S rRNA + 5'-deoxyadenosine + L-methionine + 2 oxidized [2Fe-2S]-[ferredoxin] + S-adenosyl-L-homocysteine. The enzyme catalyses adenosine(37) in tRNA + 2 reduced [2Fe-2S]-[ferredoxin] + 2 S-adenosyl-L-methionine = 2-methyladenosine(37) in tRNA + 5'-deoxyadenosine + L-methionine + 2 oxidized [2Fe-2S]-[ferredoxin] + S-adenosyl-L-homocysteine. In terms of biological role, specifically methylates position 2 of adenine 2503 in 23S rRNA and position 2 of adenine 37 in tRNAs. m2A2503 modification seems to play a crucial role in the proofreading step occurring at the peptidyl transferase center and thus would serve to optimize ribosomal fidelity. The protein is Dual-specificity RNA methyltransferase RlmN of Agrobacterium fabrum (strain C58 / ATCC 33970) (Agrobacterium tumefaciens (strain C58)).